The chain runs to 193 residues: tRNA(Phe) 7-((3-amino-3-carboxypropyl)-4-demethylwyosine(37)-N(4))-methyltransferase (193 aa).

This sequence belongs to the TYW3 family.

The enzyme catalyses 4-demethyl-7-[(3S)-3-amino-3-carboxypropyl]wyosine(37) in tRNA(Phe) + S-adenosyl-L-methionine = 7-[(3S)-3-amino-3-carboxypropyl]wyosine(37) in tRNA(Phe) + S-adenosyl-L-homocysteine + H(+). S-adenosyl-L-methionine-dependent methyltransferase that acts as a component of the wyosine derivatives biosynthesis pathway. Probably methylates N-4 position of wybutosine-86 to produce wybutosine-72. This chain is tRNA(Phe) 7-((3-amino-3-carboxypropyl)-4-demethylwyosine(37)-N(4))-methyltransferase, found in Methanocaldococcus jannaschii (strain ATCC 43067 / DSM 2661 / JAL-1 / JCM 10045 / NBRC 100440) (Methanococcus jannaschii).